We begin with the raw amino-acid sequence, 247 residues long: ATP synthase subunit a, chloroplastic (247 aa).

The next 5 membrane-spanning stretches (helical) occupy residues 38–58, 95–115, 134–154, 199–219, and 220–240; these read QVLI…TIAV, VPFI…GALL, INTT…AGLT, LVVV…VMFL, and GLFT…AYIG.

This sequence belongs to the ATPase A chain family. In terms of assembly, F-type ATPases have 2 components, CF(1) - the catalytic core - and CF(0) - the membrane proton channel. CF(1) has five subunits: alpha(3), beta(3), gamma(1), delta(1), epsilon(1). CF(0) has four main subunits: a, b, b' and c.

It localises to the plastid. It is found in the chloroplast thylakoid membrane. In terms of biological role, key component of the proton channel; it plays a direct role in the translocation of protons across the membrane. The polypeptide is ATP synthase subunit a, chloroplastic (Buxus microphylla (Littleleaf boxwood)).